The sequence spans 247 residues: Phosphonates import ATP-binding protein PhnC (247 aa).

In terms of domain architecture, ABC transporter spans 5–246 (IEVKNLVKNY…EDDIRKVYQT (242 aa)). Residue 37–44 (GESGAGKS) coordinates ATP.

This sequence belongs to the ABC transporter superfamily. Phosphonates importer (TC 3.A.1.9.1) family. As to quaternary structure, the complex is composed of two ATP-binding proteins (PhnC), two transmembrane proteins (PhnE) and a solute-binding protein (PhnD).

The protein localises to the cell inner membrane. It carries out the reaction phosphonate(out) + ATP + H2O = phosphonate(in) + ADP + phosphate + H(+). Its function is as follows. Part of the ABC transporter complex PhnCDE involved in phosphonates import. Responsible for energy coupling to the transport system. The polypeptide is Phosphonates import ATP-binding protein PhnC (Fusobacterium nucleatum subsp. nucleatum (strain ATCC 25586 / DSM 15643 / BCRC 10681 / CIP 101130 / JCM 8532 / KCTC 2640 / LMG 13131 / VPI 4355)).